The sequence spans 230 residues: Orotidine 5'-phosphate decarboxylase (230 aa).

Substrate contacts are provided by residues Asp-11, Lys-34, 61 to 70, Thr-117, Arg-179, Gln-188, Gly-208, and Arg-209; that span reads DLKLHDIPNT. The active-site Proton donor is the Lys-63.

This sequence belongs to the OMP decarboxylase family. Type 1 subfamily. As to quaternary structure, homodimer.

It carries out the reaction orotidine 5'-phosphate + H(+) = UMP + CO2. It participates in pyrimidine metabolism; UMP biosynthesis via de novo pathway; UMP from orotate: step 2/2. In terms of biological role, catalyzes the decarboxylation of orotidine 5'-monophosphate (OMP) to uridine 5'-monophosphate (UMP). The protein is Orotidine 5'-phosphate decarboxylase of Streptococcus pyogenes serotype M49 (strain NZ131).